Consider the following 940-residue polypeptide: Valine--tRNA ligase (940 aa).

The 'HIGH' region signature appears at 47–57 (PNVTGILHMGH). A 'KMSKS' region motif is present at residues 564–568 (KLSKS). Lys567 contributes to the ATP binding site. Positions 873–937 (VEHIAKEKTR…ELQSILDKLA (65 aa)) form a coiled coil.

Belongs to the class-I aminoacyl-tRNA synthetase family. ValS type 1 subfamily. In terms of assembly, monomer.

It is found in the cytoplasm. The enzyme catalyses tRNA(Val) + L-valine + ATP = L-valyl-tRNA(Val) + AMP + diphosphate. Functionally, catalyzes the attachment of valine to tRNA(Val). As ValRS can inadvertently accommodate and process structurally similar amino acids such as threonine, to avoid such errors, it has a 'posttransfer' editing activity that hydrolyzes mischarged Thr-tRNA(Val) in a tRNA-dependent manner. The chain is Valine--tRNA ligase from Chlamydia abortus (strain DSM 27085 / S26/3) (Chlamydophila abortus).